Reading from the N-terminus, the 531-residue chain is Purine catabolism regulatory protein (531 aa).

Belongs to the CdaR family.

Activates the expression of pucFG, pucH, pucI, pucJKLM and guaD, while it represses pucABCDE and its own expression. This Bacillus subtilis (strain 168) protein is Purine catabolism regulatory protein (pucR).